A 359-amino-acid polypeptide reads, in one-letter code: Dihydroorotate dehydrogenase (quinone) (359 aa).

Residues Ala61–Lys65 and Thr85 contribute to the FMN site. Lys65 serves as a coordination point for substrate. Asn110–Phe114 lines the substrate pocket. Asn139 and Asn170 together coordinate FMN. Asn170 provides a ligand contact to substrate. Residue Ser173 is the Nucleophile of the active site. Asn175 serves as a coordination point for substrate. FMN contacts are provided by Lys211 and Ser239. Residue Asn240–Thr241 coordinates substrate. FMN contacts are provided by residues Gly262, Gly291, and Tyr312–Thr313.

It belongs to the dihydroorotate dehydrogenase family. Type 2 subfamily. In terms of assembly, monomer. FMN is required as a cofactor.

The protein localises to the cell membrane. The enzyme catalyses (S)-dihydroorotate + a quinone = orotate + a quinol. Its pathway is pyrimidine metabolism; UMP biosynthesis via de novo pathway; orotate from (S)-dihydroorotate (quinone route): step 1/1. Functionally, catalyzes the conversion of dihydroorotate to orotate with quinone as electron acceptor. In Mesorhizobium japonicum (strain LMG 29417 / CECT 9101 / MAFF 303099) (Mesorhizobium loti (strain MAFF 303099)), this protein is Dihydroorotate dehydrogenase (quinone).